We begin with the raw amino-acid sequence, 704 residues long: DNA ligase (704 aa).

Residues 43-47 (DADYD), 92-93 (SL), and Glu-124 contribute to the NAD(+) site. Lys-126 (N6-AMP-lysine intermediate) is an active-site residue. Arg-147, Glu-182, Lys-298, and Lys-322 together coordinate NAD(+). The Zn(2+) site is built by Cys-427, Cys-430, Cys-445, and Cys-451. Residues 625-704 (PVASPVAGKI…DGWLRLIGDA (80 aa)) enclose the BRCT domain.

The protein belongs to the NAD-dependent DNA ligase family. LigA subfamily. Mg(2+) serves as cofactor. Mn(2+) is required as a cofactor.

It catalyses the reaction NAD(+) + (deoxyribonucleotide)n-3'-hydroxyl + 5'-phospho-(deoxyribonucleotide)m = (deoxyribonucleotide)n+m + AMP + beta-nicotinamide D-nucleotide.. Functionally, DNA ligase that catalyzes the formation of phosphodiester linkages between 5'-phosphoryl and 3'-hydroxyl groups in double-stranded DNA using NAD as a coenzyme and as the energy source for the reaction. It is essential for DNA replication and repair of damaged DNA. The sequence is that of DNA ligase from Cereibacter sphaeroides (strain ATCC 17029 / ATH 2.4.9) (Rhodobacter sphaeroides).